Here is a 675-residue protein sequence, read N- to C-terminus: Alpha-1,4-glucan:maltose-1-phosphate maltosyltransferase (675 aa).

Alpha-maltose 1-phosphate is bound by residues Lys256, Gln316, and Asp351. The Nucleophile role is filled by Asp386. Asn387 is an alpha-maltose 1-phosphate binding site. Residue Glu415 is the Proton donor of the active site. An alpha-maltose 1-phosphate-binding site is contributed by 525-526 (KY).

Belongs to the glycosyl hydrolase 13 family. GlgE subfamily. In terms of assembly, homodimer.

The enzyme catalyses alpha-maltose 1-phosphate + [(1-&gt;4)-alpha-D-glucosyl](n) = [(1-&gt;4)-alpha-D-glucosyl](n+2) + phosphate. Maltosyltransferase that uses maltose 1-phosphate (M1P) as the sugar donor to elongate linear or branched alpha-(1-&gt;4)-glucans. Is involved in a branched alpha-glucan biosynthetic pathway from trehalose, together with TreS, Mak and GlgB. The protein is Alpha-1,4-glucan:maltose-1-phosphate maltosyltransferase of Corynebacterium glutamicum (strain ATCC 13032 / DSM 20300 / JCM 1318 / BCRC 11384 / CCUG 27702 / LMG 3730 / NBRC 12168 / NCIMB 10025 / NRRL B-2784 / 534).